A 713-amino-acid polypeptide reads, in one-letter code: Nuclear poly(A) polymerase 1 (713 aa).

ATP-binding positions include 91–93, 103–106, Asp159, Tyr229, and 238–239; these read FGS, ADID, and GI. Asp104, Asp106, and Asp159 together coordinate Mg(2+). A disordered region spans residues 480 to 555; the sequence is FVFPGGVRPS…TLTDQPRNSK (76 aa). The span at 507 to 526 shows a compositional bias: low complexity; the sequence is SSTSSAPAATTTTTEMSSES.

This sequence belongs to the poly(A) polymerase family. In terms of assembly, monomer. Forms a complex with cleavage and polyadenylation specificity factor (CPSF) subunit PAPS4. Requires Mg(2+) as cofactor. The cofactor is Mn(2+). Expressed in stems, cotyledons, hypocotyls, radicle, leaves, and, to a lower extent, in roots (including primary and secondary roots as well as root tips) and flowers. In radicle, roots and leaves, mainly present in vascular tissues.

Its subcellular location is the nucleus. It carries out the reaction RNA(n) + ATP = RNA(n)-3'-adenine ribonucleotide + diphosphate. Essential protein. Polymerase that creates the 3'-poly(A) tail of mRNA's. Also required for the endoribonucleolytic cleavage reaction at some polyadenylation sites. May acquire specificity through interaction with a cleavage and polyadenylation specificity factor (CPSF) at its C-terminus. This Arabidopsis thaliana (Mouse-ear cress) protein is Nuclear poly(A) polymerase 1.